A 212-amino-acid chain; its full sequence is Ropporin-1B (212 aa).

One can recognise an RIIa domain in the interval 12–49 (PELPKMLKEFAKAAIRAQPQDLIQWGADYFEALSRGET). Position 56 is a phosphoserine (Ser-56). Residues 209-212 (VWLE) are interaction with RHPN1.

It belongs to the ropporin family. In terms of assembly, homodimer. Interacts with RHPN1. May interact with SPA17. Interacts with AKAP3. Interacts with FSCB; the interaction increases upon spermatozoa capacitation conditions. Sumoylated, sumoylation decreases upon spermatozoa capacitation conditions.

The protein resides in the cell projection. Its subcellular location is the cilium. It localises to the flagellum. Its function is as follows. Important for male fertility. With ROPN1L, involved in fibrous sheath integrity and sperm motility, plays a role in PKA-dependent signaling processes required for spermatozoa capacitation. The chain is Ropporin-1B (ROPN1B) from Homo sapiens (Human).